Here is a 187-residue protein sequence, read N- to C-terminus: Crossover junction endodeoxyribonuclease RuvC (187 aa).

Residues Asp-7, Glu-67, and Asp-140 contribute to the active site. The Mg(2+) site is built by Asp-7, Glu-67, and Asp-140.

The protein belongs to the RuvC family. Homodimer which binds Holliday junction (HJ) DNA. The HJ becomes 2-fold symmetrical on binding to RuvC with unstacked arms; it has a different conformation from HJ DNA in complex with RuvA. In the full resolvosome a probable DNA-RuvA(4)-RuvB(12)-RuvC(2) complex forms which resolves the HJ. Mg(2+) serves as cofactor.

It localises to the cytoplasm. It catalyses the reaction Endonucleolytic cleavage at a junction such as a reciprocal single-stranded crossover between two homologous DNA duplexes (Holliday junction).. In terms of biological role, the RuvA-RuvB-RuvC complex processes Holliday junction (HJ) DNA during genetic recombination and DNA repair. Endonuclease that resolves HJ intermediates. Cleaves cruciform DNA by making single-stranded nicks across the HJ at symmetrical positions within the homologous arms, yielding a 5'-phosphate and a 3'-hydroxyl group; requires a central core of homology in the junction. The consensus cleavage sequence is 5'-(A/T)TT(C/G)-3'. Cleavage occurs on the 3'-side of the TT dinucleotide at the point of strand exchange. HJ branch migration catalyzed by RuvA-RuvB allows RuvC to scan DNA until it finds its consensus sequence, where it cleaves and resolves the cruciform DNA. This chain is Crossover junction endodeoxyribonuclease RuvC, found in Chlorobium phaeobacteroides (strain DSM 266 / SMG 266 / 2430).